The following is a 91-amino-acid chain: Large ribosomal subunit protein bL27 (91 aa).

Residues 1 to 26 (MAHKKGVGSSRNGRDSNPKMRGVKRF) are disordered.

Belongs to the bacterial ribosomal protein bL27 family.

The protein is Large ribosomal subunit protein bL27 of Chloroflexus aurantiacus (strain ATCC 29366 / DSM 635 / J-10-fl).